The sequence spans 364 residues: NAC transcription factor 56 (364 aa).

The interval Met1 to Phe23 is disordered. Positions Gly9–Pro18 are enriched in pro residues. Residues Leu17–Lys178 form the NAC domain. A DNA-binding region spans residues Val116–His184.

Stamen specific, in anthers from stage 8. Expressed in the outer integument, but seems not expressed in the embryo at the torpedo stage.

It is found in the nucleus. Functionally, transcription factor of the NAC family. Together with NAC018/NARS2, regulates embryogenesis by regulating the development and degeneration of ovule integuments, a process required for intertissue communication between the embryo and the maternal integument. In Arabidopsis thaliana (Mouse-ear cress), this protein is NAC transcription factor 56.